Consider the following 275-residue polypeptide: Polyamine aminopropyltransferase 1 (275 aa).

In terms of domain architecture, PABS spans 2-235 (ELWFTEKQTK…GLWTFTIGSK (234 aa)). Residue Gln-31 coordinates S-methyl-5'-thioadenosine. The spermidine site is built by His-62 and Asp-86. S-methyl-5'-thioadenosine is bound by residues Glu-106 and 137-138 (DG). Catalysis depends on Asp-155, which acts as the Proton acceptor. 155-158 (DSTE) serves as a coordination point for spermidine. Pro-162 provides a ligand contact to S-methyl-5'-thioadenosine.

Belongs to the spermidine/spermine synthase family. In terms of assembly, homodimer or homotetramer.

It is found in the cytoplasm. It carries out the reaction S-adenosyl 3-(methylsulfanyl)propylamine + putrescine = S-methyl-5'-thioadenosine + spermidine + H(+). It participates in amine and polyamine biosynthesis; spermidine biosynthesis; spermidine from putrescine: step 1/1. In terms of biological role, catalyzes the irreversible transfer of a propylamine group from the amino donor S-adenosylmethioninamine (decarboxy-AdoMet) to putrescine (1,4-diaminobutane) to yield spermidine. The protein is Polyamine aminopropyltransferase 1 of Bacillus cereus (strain ATCC 14579 / DSM 31 / CCUG 7414 / JCM 2152 / NBRC 15305 / NCIMB 9373 / NCTC 2599 / NRRL B-3711).